The primary structure comprises 344 residues: CRISPR-associated endonuclease Cas1 2 (344 aa).

Positions 167, 235, and 250 each coordinate Mn(2+).

This sequence belongs to the CRISPR-associated endonuclease Cas1 family. As to quaternary structure, homodimer, forms a heterotetramer with a Cas2 homodimer. Requires Mg(2+) as cofactor. Mn(2+) serves as cofactor.

CRISPR (clustered regularly interspaced short palindromic repeat), is an adaptive immune system that provides protection against mobile genetic elements (viruses, transposable elements and conjugative plasmids). CRISPR clusters contain spacers, sequences complementary to antecedent mobile elements, and target invading nucleic acids. CRISPR clusters are transcribed and processed into CRISPR RNA (crRNA). Acts as a dsDNA endonuclease. Involved in the integration of spacer DNA into the CRISPR cassette. This Rhodospirillum rubrum (strain ATCC 11170 / ATH 1.1.1 / DSM 467 / LMG 4362 / NCIMB 8255 / S1) protein is CRISPR-associated endonuclease Cas1 2.